A 318-amino-acid polypeptide reads, in one-letter code: uncharacterized protein (318 aa).

A helical membrane pass occupies residues 2 to 22; that stretch reads ILELIIVLVLLVLAFKSLKIL. Residues 295 to 318 are disordered; it reads SDPEDKGVSEVETESQPAEKPEKH.

Belongs to the band 7/mec-2 family.

Its subcellular location is the membrane. This is an uncharacterized protein from Methanothermobacter thermautotrophicus (strain ATCC 29096 / DSM 1053 / JCM 10044 / NBRC 100330 / Delta H) (Methanobacterium thermoautotrophicum).